Consider the following 219-residue polypeptide: Transmembrane protein 247 (219 aa).

2 stretches are compositionally biased toward basic and acidic residues: residues 1-10 (MAAEDREMME) and 29-45 (SKSE…ESQK). The disordered stretch occupies residues 1–101 (MAAEDREMME…LPPTPGTERN (101 aa)). The stretch at 121–156 (LHEKNQRQRQHEVVMEQLQRERQHEVVMEQLQQEAA) forms a coiled coil. A run of 2 helical transmembrane segments spans residues 167–187 (FLLP…IHII) and 194–214 (VFFL…LCLI).

The protein localises to the membrane. This Homo sapiens (Human) protein is Transmembrane protein 247 (TMEM247).